The following is a 1258-amino-acid chain: Serine/threonine-protein kinase Nek1 (1258 aa).

The 255-residue stretch at 4 to 258 (YVRLQKIGEG…VNSILEKGFI (255 aa)) folds into the Protein kinase domain. ATP-binding positions include 10 to 18 (IGEGSFGKA) and lysine 33. Aspartate 128 serves as the catalytic Proton acceptor. Position 156 is a phosphothreonine (threonine 156). Threonine 162 carries the phosphothreonine; by autocatalysis modification. Residues 330–360 (HEKKPLQKHKQAHQTPEKRVNTGEERRKISE) are disordered. Positions 344–360 (TPEKRVNTGEERRKISE) are enriched in basic and acidic residues. Phosphoserine is present on residues serine 414, serine 418, serine 428, and serine 438. Disordered regions lie at residues 578–600 (KLRGEKKEANHSEGQEGSEEADM), 648–669 (KSSDVSPPLGQHETGGSPSKQQ), and 685–704 (VDSSLTDTRETSEEMQKTNN). Positions 579 to 591 (LRGEKKEANHSEG) are enriched in basic and acidic residues. Serine 653 is modified (phosphoserine). A Phosphothreonine modification is found at threonine 661. Phosphoserine is present on serine 664. Positions 691–700 (DTRETSEEMQ) are enriched in basic and acidic residues. Phosphoserine is present on residues serine 798, serine 834, serine 868, serine 881, serine 1052, and serine 1126. Residues 1118-1171 (REQPGEEYSEEEESVLKNSDVEPTANGTDVADEDDNPSSESALNEEWHSDNSDG) are disordered.

It belongs to the protein kinase superfamily. NEK Ser/Thr protein kinase family. NIMA subfamily. Binds to CBY2. Found in a complex with CFAP410, NEK1 and SPATA7. Interacts with CFAP410. Interacts (via Ser-1052 phosphorylated form) with 14-3-3 proteins. Mg(2+) serves as cofactor. High fetal expression in the brain and kidney.

It localises to the nucleus. The protein localises to the cytoplasm. It is found in the cytoskeleton. Its subcellular location is the microtubule organizing center. The protein resides in the centrosome. It catalyses the reaction L-seryl-[protein] + ATP = O-phospho-L-seryl-[protein] + ADP + H(+). The enzyme catalyses L-threonyl-[protein] + ATP = O-phospho-L-threonyl-[protein] + ADP + H(+). Its function is as follows. Phosphorylates serines and threonines, but also appears to possess tyrosine kinase activity. Involved in DNA damage checkpoint control and for proper DNA damage repair. In response to injury that includes DNA damage, NEK1 phosphorylates VDAC1 to limit mitochondrial cell death. May be implicated in the control of meiosis. Involved in cilium assembly. This chain is Serine/threonine-protein kinase Nek1 (NEK1), found in Homo sapiens (Human).